A 186-amino-acid chain; its full sequence is Bilin biosynthesis protein CpeZ (186 aa).

Its function is as follows. Involved in the biosynthesis of bilin. This chain is Bilin biosynthesis protein CpeZ (cpeZ), found in Synechococcus sp. (strain WH8020).